Reading from the N-terminus, the 233-residue chain is Protein YIPF6 (233 aa).

Over 1–84 (MAETEGFGDS…PKKSTTLLRD (84 aa)) the chain is Cytoplasmic. The chain crosses the membrane as a helical span at residues 85–105 (WDLWGPLVLCVSLALMLQGGN). Over 106 to 111 (ADSKDD) the chain is Lumenal. Residues 112-132 (GGPQFAEVFVIIWFGAVVITL) traverse the membrane as a helical segment. Residues 133–142 (NSKLLGGTIS) lie on the Cytoplasmic side of the membrane. A helical transmembrane segment spans residues 143 to 163 (FFQSLCVLGYCILPLTVAMLV). The Lumenal portion of the chain corresponds to 164–180 (CRLVLLLSHTTASFIVR). A helical membrane pass occupies residues 181-201 (LVVVTVMFAWSTFASTAFLAD). Over 202 to 208 (SQPPNRR) the chain is Cytoplasmic. A helical membrane pass occupies residues 209–229 (ALAVYPIFLFYFVISWMVLTF). Over 230 to 233 (NTVS) the chain is Lumenal.

The protein belongs to the YIP1 family.

The protein localises to the golgi apparatus membrane. The protein is Protein YIPF6 (yipf6) of Xenopus tropicalis (Western clawed frog).